A 409-amino-acid chain; its full sequence is Imidazolonepropionase (409 aa).

Residues histidine 70 and histidine 72 each coordinate Fe(3+). Zn(2+) is bound by residues histidine 70 and histidine 72. Residues arginine 79, tyrosine 137, and histidine 164 each contribute to the 4-imidazolone-5-propanoate site. Tyrosine 137 lines the N-formimidoyl-L-glutamate pocket. Fe(3+) is bound at residue histidine 225. A Zn(2+)-binding site is contributed by histidine 225. Glutamine 228 is a binding site for 4-imidazolone-5-propanoate. 2 residues coordinate N-formimidoyl-L-glutamate: asparagine 314 and glycine 316. Position 317 (threonine 317) interacts with 4-imidazolone-5-propanoate.

Belongs to the metallo-dependent hydrolases superfamily. HutI family. It depends on Zn(2+) as a cofactor. Requires Fe(3+) as cofactor.

The protein localises to the cytoplasm. It carries out the reaction 4-imidazolone-5-propanoate + H2O = N-formimidoyl-L-glutamate. It functions in the pathway amino-acid degradation; L-histidine degradation into L-glutamate; N-formimidoyl-L-glutamate from L-histidine: step 3/3. Functionally, catalyzes the hydrolytic cleavage of the carbon-nitrogen bond in imidazolone-5-propanoate to yield N-formimidoyl-L-glutamate. It is the third step in the universal histidine degradation pathway. The chain is Imidazolonepropionase from Paenarthrobacter aurescens (strain TC1).